A 227-amino-acid polypeptide reads, in one-letter code: 7-cyano-7-deazaguanine synthase (227 aa).

Residue 9 to 19 (LSGGLDSATVL) coordinates ATP. Zn(2+) is bound by residues cysteine 189, cysteine 199, cysteine 202, and cysteine 205.

Belongs to the QueC family. It depends on Zn(2+) as a cofactor.

It carries out the reaction 7-carboxy-7-deazaguanine + NH4(+) + ATP = 7-cyano-7-deazaguanine + ADP + phosphate + H2O + H(+). Its pathway is purine metabolism; 7-cyano-7-deazaguanine biosynthesis. Functionally, catalyzes the ATP-dependent conversion of 7-carboxy-7-deazaguanine (CDG) to 7-cyano-7-deazaguanine (preQ(0)). The chain is 7-cyano-7-deazaguanine synthase from Cupriavidus necator (strain ATCC 17699 / DSM 428 / KCTC 22496 / NCIMB 10442 / H16 / Stanier 337) (Ralstonia eutropha).